The sequence spans 129 residues: Azurin-2 (129 aa).

In terms of domain architecture, Plastocyanin-like spans 1-129 (AQCEATVESN…MMKGTLKLGS (129 aa)). A disulfide bond links cysteine 3 and cysteine 26. Residues histidine 46, cysteine 112, histidine 117, and methionine 121 each contribute to the Cu cation site.

It is found in the periplasm. Transfers electrons from cytochrome c551 to cytochrome oxidase. The sequence is that of Azurin-2 from Alcaligenes xylosoxydans xylosoxydans (Achromobacter xylosoxidans).